Consider the following 337-residue polypeptide: Inositol 2-dehydrogenase (337 aa).

The protein belongs to the Gfo/Idh/MocA family. In terms of assembly, homotetramer.

The enzyme catalyses myo-inositol + NAD(+) = scyllo-inosose + NADH + H(+). In terms of biological role, involved in the oxidation of myo-inositol (MI) to 2-keto-myo-inositol (2KMI or 2-inosose). The protein is Inositol 2-dehydrogenase of Serratia proteamaculans (strain 568).